The sequence spans 134 residues: Cytochrome b (134 aa).

Helical transmembrane passes span 33-53 (FGSL…FLAM), 77-98 (WILR…FLHV), and 113-133 (WNIG…GYVL). 2 residues coordinate heme b: histidine 83 and histidine 97.

It belongs to the cytochrome b family. As to quaternary structure, the cytochrome bc1 complex contains 11 subunits: 3 respiratory subunits (MT-CYB, CYC1 and UQCRFS1), 2 core proteins (UQCRC1 and UQCRC2) and 6 low-molecular weight proteins (UQCRH/QCR6, UQCRB/QCR7, UQCRQ/QCR8, UQCR10/QCR9, UQCR11/QCR10 and a cleavage product of UQCRFS1). This cytochrome bc1 complex then forms a dimer. Heme b is required as a cofactor.

It localises to the mitochondrion inner membrane. Its function is as follows. Component of the ubiquinol-cytochrome c reductase complex (complex III or cytochrome b-c1 complex) that is part of the mitochondrial respiratory chain. The b-c1 complex mediates electron transfer from ubiquinol to cytochrome c. Contributes to the generation of a proton gradient across the mitochondrial membrane that is then used for ATP synthesis. The chain is Cytochrome b (MT-CYB) from Rhinolophus hipposideros (Lesser horseshoe bat).